Consider the following 120-residue polypeptide: Large ribosomal subunit protein uL18 (120 aa).

This sequence belongs to the universal ribosomal protein uL18 family. Part of the 50S ribosomal subunit; part of the 5S rRNA/L5/L18/L25 subcomplex. Contacts the 5S and 23S rRNAs.

In terms of biological role, this is one of the proteins that bind and probably mediate the attachment of the 5S RNA into the large ribosomal subunit, where it forms part of the central protuberance. The polypeptide is Large ribosomal subunit protein uL18 (Macrococcus caseolyticus (strain JCSC5402) (Macrococcoides caseolyticum)).